The chain runs to 224 residues: Ribosomal RNA large subunit methyltransferase E (224 aa).

Residues glycine 64, tryptophan 66, aspartate 97, aspartate 113, and aspartate 138 each coordinate S-adenosyl-L-methionine. Lysine 178 (proton acceptor) is an active-site residue.

Belongs to the class I-like SAM-binding methyltransferase superfamily. RNA methyltransferase RlmE family.

The protein resides in the cytoplasm. The enzyme catalyses uridine(2552) in 23S rRNA + S-adenosyl-L-methionine = 2'-O-methyluridine(2552) in 23S rRNA + S-adenosyl-L-homocysteine + H(+). Functionally, specifically methylates the uridine in position 2552 of 23S rRNA at the 2'-O position of the ribose in the fully assembled 50S ribosomal subunit. This chain is Ribosomal RNA large subunit methyltransferase E, found in Albidiferax ferrireducens (strain ATCC BAA-621 / DSM 15236 / T118) (Rhodoferax ferrireducens).